The primary structure comprises 38 residues: Large ribosomal subunit protein bL36 (38 aa).

It belongs to the bacterial ribosomal protein bL36 family.

The sequence is that of Large ribosomal subunit protein bL36 from Chloroherpeton thalassium (strain ATCC 35110 / GB-78).